Here is a 574-residue protein sequence, read N- to C-terminus: Cyclomaltodextrinase (574 aa).

Residues Asn144, Asp146, Asn149, Asp150, Gly168, and Asp170 each coordinate Ca(2+). His243 and Arg323 together coordinate substrate. Asp325 (nucleophile) is an active-site residue. Glu354 functions as the Proton donor in the catalytic mechanism. Substrate-binding positions include 420-421 (HD), Asp465, and Arg469.

The protein belongs to the glycosyl hydrolase 13 family. In terms of assembly, monomer. Requires Ca(2+) as cofactor.

It catalyses the reaction cyclomaltodextrin + H2O = linear maltodextrin. Functionally, hydrolyzes cyclodextrins. Can also act on linear maltodextrins, with the exception of maltose. The polypeptide is Cyclomaltodextrinase (Thermoanaerobacter pseudethanolicus (strain ATCC 33223 / 39E) (Clostridium thermohydrosulfuricum)).